The chain runs to 96 residues: Dynein light chain roadblock-type 1 (96 aa).

Residue A2 is modified to N-acetylalanine.

This sequence belongs to the GAMAD family. As to quaternary structure, homodimer. The cytoplasmic dynein 1 complex consists of two catalytic heavy chains (HCs) and a number of non-catalytic subunits presented by intermediate chains (ICs), light intermediate chains (LICs) and light chains (LCs); the composition seems to vary in respect to the IC, LIC and LC composition. The heavy chain homodimer serves as a scaffold for the probable homodimeric assembly of the respective non-catalytic subunits. The ICs and LICs bind directly to the HC dimer and the LCs assemble on the IC dimer. Interacts with DYNLRB2. Interacts with DYNC1I1 and DYNC1I2. Interacts with RAB6A isoform 1 (GTP-bound); the interaction is direct. Interacts with RAB6A isoform 2 (GDP-bound); the interaction is direct. Interacts with RAB6B (GDP-bound). In terms of tissue distribution, high expression in heart, liver, brain and pancreas; moderate in placenta, skeletal muscle and kidney; low in lung, prostate, testis, small intestine and colon. Isoform 1 expression is up-regulated in 64% hepatocellular carcinoma (HCC) patients.

It is found in the cytoplasm. The protein localises to the cytoskeleton. Functionally, acts as one of several non-catalytic accessory components of the cytoplasmic dynein 1 complex that are thought to be involved in linking dynein to cargos and to adapter proteins that regulate dynein function. Cytoplasmic dynein 1 acts as a motor for the intracellular retrograde motility of vesicles and organelles along microtubules. The sequence is that of Dynein light chain roadblock-type 1 from Homo sapiens (Human).